We begin with the raw amino-acid sequence, 234 residues long: MVSPENANWICDLIDADYGSFTIQGPGFSWPVQQPIGVSSNSSAGVDGSAGNSEASKEPGSKKRGRCESSSATSSKACREKQRRDRLNDKFMELGAILEPGNPPKTDKAAILVDAVRMVTQLRGEAQKLKDSNSSLQDKIKELKTEKNELRDEKQRLKTEKEKLEQQLKAMNAPQPSFFPAPPMMPTAFASAQGQAPGNKMVPIISYPGVAMWQFMPPASVDTSQDHVLRPPVA.

Residues 34-85 (QPIGVSSNSSAGVDGSAGNSEASKEPGSKKRGRCESSSATSSKACREKQRRD) are disordered. Polar residues predominate over residues 36–54 (IGVSSNSSAGVDGSAGNSE). Positions 71 to 122 (SATSSKACREKQRRDRLNDKFMELGAILEPGNPPKTDKAAILVDAVRMVTQL) constitute a bHLH domain.

As to quaternary structure, homodimer. Interacts with BTS and BHLH47/PYE. In terms of tissue distribution, widely expressed throughout development, mostly in vasculatures.

The protein resides in the nucleus. Its function is as follows. Transcription factor. Plays a role in resistance to amide-linked indole-3-acetic acid (IAA) conjugates such as IAA-Leu and IAA-Phe. May regulate gene expression in response to metal homeostasis changes. In Arabidopsis thaliana (Mouse-ear cress), this protein is Transcription factor ILR3 (ILR3).